The sequence spans 237 residues: Oligoribonuclease, mitochondrial (237 aa).

The transit peptide at 1–25 (MLGGSLGSRLLRGVGGSHGRFGARG) directs the protein to the mitochondrion. One can recognise an Exonuclease domain in the interval 43 to 207 (MVWVDLEMTG…DDISESIKEL (165 aa)). 2 residues coordinate Mg(2+): D47 and E49. The residue at position 92 (S92) is a Phosphoserine. At Y122 the chain carries Phosphotyrosine. A Mg(2+)-binding site is contributed by D147. The residue at position 173 (K173) is an N6-acetyllysine. The active site involves H194. D199 contributes to the Mg(2+) binding site.

It belongs to the oligoribonuclease family. As to quaternary structure, homodimer. Homotetramer. The cofactor is Mn(2+). Mg(2+) is required as a cofactor. As to expression, highly expressed in the heart and at lower levels in the lymph nodes, brain, lung, liver, spleen and thymus.

It is found in the mitochondrion intermembrane space. Its subcellular location is the mitochondrion matrix. The protein localises to the mitochondrion. The protein resides in the cytoplasm. It localises to the nucleus. With respect to regulation, inhibited by adenosine 3',5'-bisphosphate. Its function is as follows. 3'-to-5'exoribonuclease that preferentially degrades DNA and RNA oligonucleotides composed of only two nucleotides. Binds and degrades longer oligonucleotides with a lower affinity. Plays dual roles in mitochondria, scavenging nanoRNAs (small RNA oligonucleotides of &lt;5 nucleotides) that are produced by the degradosome and clearing short RNAs that are generated by RNA processing. Essential for correct initiation of mitochondrial transcription, degrading mitochondrial RNA dinucleotides to prevent RNA-primed transcription at non-canonical sites in the mitochondrial genome. Essential for embryonic development. In terms of biological role, 3'-to-5'exoribonuclease that preferentially degrades DNA and RNA oligonucleotides composed of only two nucleotides. This Homo sapiens (Human) protein is Oligoribonuclease, mitochondrial (REXO2).